Consider the following 353-residue polypeptide: UPF0283 membrane protein YcjF (353 aa).

Transmembrane regions (helical) follow at residues 70-90, 100-120, and 213-233; these read MVMG…VQWT, VALG…GSVV, and ESTL…FIAW.

It belongs to the UPF0283 family.

The protein localises to the cell inner membrane. In Escherichia coli O45:K1 (strain S88 / ExPEC), this protein is UPF0283 membrane protein YcjF.